A 505-amino-acid polypeptide reads, in one-letter code: Aspartyl/glutamyl-tRNA(Asn/Gln) amidotransferase subunit B (505 aa).

Positions 220-241 (NVSLRPRPAPGDPDAPFGTRSE) are disordered.

The protein belongs to the GatB/GatE family. GatB subfamily. Heterotrimer of A, B and C subunits.

It catalyses the reaction L-glutamyl-tRNA(Gln) + L-glutamine + ATP + H2O = L-glutaminyl-tRNA(Gln) + L-glutamate + ADP + phosphate + H(+). It carries out the reaction L-aspartyl-tRNA(Asn) + L-glutamine + ATP + H2O = L-asparaginyl-tRNA(Asn) + L-glutamate + ADP + phosphate + 2 H(+). In terms of biological role, allows the formation of correctly charged Asn-tRNA(Asn) or Gln-tRNA(Gln) through the transamidation of misacylated Asp-tRNA(Asn) or Glu-tRNA(Gln) in organisms which lack either or both of asparaginyl-tRNA or glutaminyl-tRNA synthetases. The reaction takes place in the presence of glutamine and ATP through an activated phospho-Asp-tRNA(Asn) or phospho-Glu-tRNA(Gln). The sequence is that of Aspartyl/glutamyl-tRNA(Asn/Gln) amidotransferase subunit B from Frankia casuarinae (strain DSM 45818 / CECT 9043 / HFP020203 / CcI3).